A 238-amino-acid polypeptide reads, in one-letter code: tRNA (guanine-N(7)-)-methyltransferase (238 aa).

Residues Glu70, Asp95, Asp122, and Asp145 each coordinate S-adenosyl-L-methionine. The active site involves Asp145. Substrate is bound by residues Lys149, Asp181, and 216-219 (TKFE).

This sequence belongs to the class I-like SAM-binding methyltransferase superfamily. TrmB family.

It carries out the reaction guanosine(46) in tRNA + S-adenosyl-L-methionine = N(7)-methylguanosine(46) in tRNA + S-adenosyl-L-homocysteine. It participates in tRNA modification; N(7)-methylguanine-tRNA biosynthesis. In terms of biological role, catalyzes the formation of N(7)-methylguanine at position 46 (m7G46) in tRNA. This chain is tRNA (guanine-N(7)-)-methyltransferase, found in Neisseria meningitidis serogroup A / serotype 4A (strain DSM 15465 / Z2491).